Reading from the N-terminus, the 297-residue chain is Probable endonuclease 4 (297 aa).

Residues H69, H110, E145, D179, H182, H214, D227, H229, and E259 each contribute to the Zn(2+) site.

The protein belongs to the AP endonuclease 2 family. Zn(2+) is required as a cofactor.

The enzyme catalyses Endonucleolytic cleavage to 5'-phosphooligonucleotide end-products.. Endonuclease IV plays a role in DNA repair. It cleaves phosphodiester bonds at apurinic or apyrimidinic (AP) sites, generating a 3'-hydroxyl group and a 5'-terminal sugar phosphate. This is Probable endonuclease 4 from Listeria innocua serovar 6a (strain ATCC BAA-680 / CLIP 11262).